Consider the following 347-residue polypeptide: BSD domain-containing protein C22A12.14c (347 aa).

Phosphothreonine occurs at positions 123 and 125. The BSD domain maps to 167–219 (WEKEISIDGKTEEISLLLEEYPDLRKQMESLVPSEVSYDDFWKRFFWHKEVVQ). A disordered region spans residues 229–347 (DEEEIFSWGD…DDDEDDDDWE (119 aa)). Ser235, Ser241, and Ser246 each carry phosphoserine. Acidic residues predominate over residues 240–251 (RSDEEESDNEQV). Residues 297-312 (HDGEVDGEVKEEEENK) are compositionally biased toward basic and acidic residues. A compositionally biased stretch (low complexity) spans 313–325 (VSSSSNIEASQSS). Residues 327–337 (EVKDEANRKVD) are compositionally biased toward basic and acidic residues. Acidic residues predominate over residues 338-347 (DDDEDDDDWE).

The protein resides in the cytoplasm. The protein is BSD domain-containing protein C22A12.14c of Schizosaccharomyces pombe (strain 972 / ATCC 24843) (Fission yeast).